Reading from the N-terminus, the 419-residue chain is Histidine--tRNA ligase (419 aa).

The protein belongs to the class-II aminoacyl-tRNA synthetase family. As to quaternary structure, homodimer.

It is found in the cytoplasm. It catalyses the reaction tRNA(His) + L-histidine + ATP = L-histidyl-tRNA(His) + AMP + diphosphate + H(+). This is Histidine--tRNA ligase from Caldicellulosiruptor saccharolyticus (strain ATCC 43494 / DSM 8903 / Tp8T 6331).